Consider the following 337-residue polypeptide: Serpentine receptor class delta-18 (337 aa).

A run of 6 helical transmembrane segments spans residues 2 to 22, 90 to 110, 130 to 150, 187 to 207, 236 to 256, and 270 to 290; these read IIFF…LNLL, VGLS…LLSF, LILV…TIFA, IYSI…IFIL, ALTI…FYFL, and SIYA…LYFV.

Belongs to the nematode receptor-like protein srd family.

It is found in the membrane. This chain is Serpentine receptor class delta-18 (srd-18), found in Caenorhabditis elegans.